The following is a 135-amino-acid chain: Small ribosomal subunit protein eS6 (135 aa).

It belongs to the eukaryotic ribosomal protein eS6 family.

The sequence is that of Small ribosomal subunit protein eS6 from Methanococcoides burtonii (strain DSM 6242 / NBRC 107633 / OCM 468 / ACE-M).